Here is a 492-residue protein sequence, read N- to C-terminus: Pre-mRNA-processing factor 19 (492 aa).

Residues 1–72 (MSFVCGISGE…APRNVSGTSI (72 aa)) form the U-box domain. WD repeat units lie at residues 207-246 (HSTG…VMQT), 249-288 (GHNK…SKAI), 291-330 (VHQA…SLCK), 336-375 (GSQI…VAAA), 378-417 (GHTA…NLKT), and 461-491 (DHSG…RVFS).

This sequence belongs to the WD repeat PRP19 family. In terms of assembly, homotetramer. Component of the NTC complex (or PRP19-associated complex) which is associated with the spliceosome.

It is found in the nucleus. Its subcellular location is the nucleoplasm. It catalyses the reaction S-ubiquitinyl-[E2 ubiquitin-conjugating enzyme]-L-cysteine + [acceptor protein]-L-lysine = [E2 ubiquitin-conjugating enzyme]-L-cysteine + N(6)-ubiquitinyl-[acceptor protein]-L-lysine.. It participates in protein modification; protein ubiquitination. Functionally, probable ubiquitin-protein ligase which is mainly involved pre-mRNA splicing and DNA repair. Core component of the NTC/Nineteen complex which is part of the spliceosome and participates in its assembly, its remodeling and is required for its activity. Together with emb-4, necessary for interaction of rnp-4, a probable exon junction complex component, with mRNAs and spliceosomal snRNAs. Plays a role in nuclear retention of unspliced mRNAs. In Caenorhabditis elegans, this protein is Pre-mRNA-processing factor 19 (prp-19).